Reading from the N-terminus, the 339-residue chain is MEVVSKIDQENQAKIWKQIFGFAESLVLKCAVQLEIAETLHNNVKPMSLSELASKLPAQPVNEDRLYRILHFLVHMKLFNKDATTQKYSLAPPAKYLLKGWEKSMVPSILSVTDKDFTAPWNHLGDGLTGNCNAFEKALGKGIRVYMRENPEKDQLFNEGMACDTRLFASALVNECKSIFSDGINTLAGVGRGTGTAVKAISKAFPDIKCTIHDLPEVTSKNSKIPRDVFKSVPSADAIFMKSILHEWNDEECIQILKRCKEAIPKGGKVIIADVVIDMDSTHPYSKSRLAMDLAMMLHTGGKERTEEDWKKLIDAAGFASCKITKLSALQSVIEAYPH.

An S-adenosyl-L-methionine-binding site is contributed by M161. Residue D164 coordinates substrate. Residues T165, G191, D214, 228–229 (DV), and K242 contribute to the S-adenosyl-L-methionine site. Residue 243 to 247 (SILHE) coordinates substrate. The Proton acceptor role is filled by H246.

This sequence belongs to the class I-like SAM-binding methyltransferase superfamily. Cation-independent O-methyltransferase family. COMT subfamily. In terms of assembly, homodimer. Forms heterodimer with SOMT2. The heterodimer SOMT2-SOMT3 possesses 3-O-acetyl-4'-O-demethylpapaveroxine 4'-O-methyltransferase activity, where SOMT2 is the catalytic subunit. As to expression, highly expressed in capsules. Expressed is stems. Expressed at low levels in roots.

The enzyme catalyses (S)-scoulerine + S-adenosyl-L-methionine = (S)-tetrahydrocolumbamine + S-adenosyl-L-homocysteine + H(+). Its pathway is alkaloid biosynthesis. Functionally, methyltransferase involved in the biosynthesis of the benzylisoquinoline alkaloid noscapine. Catalyzes the conversion of (S)-scoulerine to (S)-tetrahydrocolumbamine. In Papaver somniferum (Opium poppy), this protein is Scoulerine-9-O-methyltransferase 3.